The sequence spans 327 residues: UDP-N-acetylenolpyruvoylglucosamine reductase (327 aa).

The FAD-binding PCMH-type domain maps to 42 to 223; the sequence is RTGGLAELFY…RAAMDEVALH (182 aa). The active site involves arginine 188. Catalysis depends on serine 237, which acts as the Proton donor. Residue glutamate 307 is part of the active site.

Belongs to the MurB family. The cofactor is FAD.

It is found in the cytoplasm. The enzyme catalyses UDP-N-acetyl-alpha-D-muramate + NADP(+) = UDP-N-acetyl-3-O-(1-carboxyvinyl)-alpha-D-glucosamine + NADPH + H(+). It participates in cell wall biogenesis; peptidoglycan biosynthesis. Cell wall formation. This is UDP-N-acetylenolpyruvoylglucosamine reductase from Bartonella tribocorum (strain CIP 105476 / IBS 506).